The chain runs to 597 residues: Elongation factor 4 (597 aa).

Positions 2–184 (KNIRNFSIIA…EIVAKIPAPT (183 aa)) constitute a tr-type G domain. GTP-binding positions include 14–19 (DHGKST) and 131–134 (NKID).

The protein belongs to the TRAFAC class translation factor GTPase superfamily. Classic translation factor GTPase family. LepA subfamily.

Its subcellular location is the cell inner membrane. The catalysed reaction is GTP + H2O = GDP + phosphate + H(+). Functionally, required for accurate and efficient protein synthesis under certain stress conditions. May act as a fidelity factor of the translation reaction, by catalyzing a one-codon backward translocation of tRNAs on improperly translocated ribosomes. Back-translocation proceeds from a post-translocation (POST) complex to a pre-translocation (PRE) complex, thus giving elongation factor G a second chance to translocate the tRNAs correctly. Binds to ribosomes in a GTP-dependent manner. The chain is Elongation factor 4 from Neisseria gonorrhoeae (strain ATCC 700825 / FA 1090).